A 353-amino-acid polypeptide reads, in one-letter code: sn-glycerol-3-phosphate import ATP-binding protein UgpC (353 aa).

Residues 4–234 (ILLNDVRKSY…PASEFVAGFI (231 aa)) enclose the ABC transporter domain. 36 to 43 (GPSGCGKS) is a binding site for ATP.

This sequence belongs to the ABC transporter superfamily. sn-glycerol-3-phosphate importer (TC 3.A.1.1.3) family. As to quaternary structure, the complex is composed of two ATP-binding proteins (UgpC), two transmembrane proteins (UgpA and UgpE) and a solute-binding protein (UgpB).

The protein localises to the cell inner membrane. The catalysed reaction is sn-glycerol 3-phosphate(out) + ATP + H2O = sn-glycerol 3-phosphate(in) + ADP + phosphate + H(+). In terms of biological role, part of the ABC transporter complex UgpBAEC involved in sn-glycerol-3-phosphate (G3P) import. Responsible for energy coupling to the transport system. The chain is sn-glycerol-3-phosphate import ATP-binding protein UgpC from Paracoccus denitrificans (strain Pd 1222).